Here is a 113-residue protein sequence, read N- to C-terminus: Transcriptional regulator RamA (113 aa).

The HTH araC/xylS-type domain occupies 9–107 (DTIVEWIDDN…NQPPGAYRKE (99 aa)). 2 DNA-binding regions (H-T-H motif) span residues 26–47 (DDIA…LQYK) and 74–97 (VYDI…TRTF).

Monomer. Interacts with the C-terminus of RNAP subunit RpoA when part of class I or class II promoter complexes. Also interacts with sigma-70/RpoD in class II promoter complexes.

In terms of biological role, transcriptional regulator. Binds to regulatory regions of target genes, including its own gene, efflux pump operon acrAB, antisense RNA gene micF, and various genes involved in lipid A biosynthesis, including lpxO and lpxL-2. Regulates expression of many genes, perhaps including its own; activates various lipid A biosynthetic genes, and as a result of activating acrAB, confers multidrug resistance. Plays a role in virulence and survival in host cells. This Klebsiella pneumoniae subsp. pneumoniae (strain HS11286) protein is Transcriptional regulator RamA.